A 269-amino-acid polypeptide reads, in one-letter code: 4-hydroxy-tetrahydrodipicolinate reductase (269 aa).

NAD(+)-binding positions include 11 to 16 (GGSGRM) and Glu37. Arg38 contacts NADP(+). NAD(+) contacts are provided by residues 101–103 (GTT) and 125–128 (AGNM). Catalysis depends on His158, which acts as the Proton donor/acceptor. Position 159 (His159) interacts with (S)-2,3,4,5-tetrahydrodipicolinate. The active-site Proton donor is the Lys162. 168–169 (GT) provides a ligand contact to (S)-2,3,4,5-tetrahydrodipicolinate.

It belongs to the DapB family.

It is found in the cytoplasm. The enzyme catalyses (S)-2,3,4,5-tetrahydrodipicolinate + NAD(+) + H2O = (2S,4S)-4-hydroxy-2,3,4,5-tetrahydrodipicolinate + NADH + H(+). It catalyses the reaction (S)-2,3,4,5-tetrahydrodipicolinate + NADP(+) + H2O = (2S,4S)-4-hydroxy-2,3,4,5-tetrahydrodipicolinate + NADPH + H(+). It participates in amino-acid biosynthesis; L-lysine biosynthesis via DAP pathway; (S)-tetrahydrodipicolinate from L-aspartate: step 4/4. Its function is as follows. Catalyzes the conversion of 4-hydroxy-tetrahydrodipicolinate (HTPA) to tetrahydrodipicolinate. The protein is 4-hydroxy-tetrahydrodipicolinate reductase of Dinoroseobacter shibae (strain DSM 16493 / NCIMB 14021 / DFL 12).